The chain runs to 765 residues: SNF-related serine/threonine-protein kinase (765 aa).

The 254-residue stretch at Tyr-16–Leu-269 folds into the Protein kinase domain. Residues Leu-22–Val-30 and Lys-45 contribute to the ATP site. Asp-139 (proton acceptor) is an active-site residue. Ser-162 bears the Phosphoserine mark. Thr-173 is subject to Phosphothreonine; by LKB1. The UBA domain maps to Ser-291–Glu-334. Phosphoserine occurs at positions 362, 390, 482, 495, and 518. Residues Leu-512–Gln-634 are disordered. The segment covering Val-522–Gln-532 has biased composition (basic residues). Positions Gly-533–Glu-542 are enriched in low complexity. Omega-N-methylarginine is present on Arg-534. Residues Glu-549–Ser-558 are compositionally biased toward basic and acidic residues. A compositionally biased stretch (gly residues) spans Ala-603–Gly-614. Ser-607 bears the Phosphoserine mark.

Belongs to the protein kinase superfamily. CAMK Ser/Thr protein kinase family. Requires Mg(2+) as cofactor. In terms of processing, autophosphorylated. Phosphorylation on Thr-173 by STK11/LKB1 in complex with STE20-related adapter-alpha (STRADA) pseudo kinase and CAB39. Expressed in hematopoietic progenitor cells and leukemic cell lines. Weakly expressed in the testis.

It is found in the nucleus. It carries out the reaction L-seryl-[protein] + ATP = O-phospho-L-seryl-[protein] + ADP + H(+). The catalysed reaction is L-threonyl-[protein] + ATP = O-phospho-L-threonyl-[protein] + ADP + H(+). Activated by phosphorylation on Thr-173. Its function is as follows. May play a role in hematopoietic cell proliferation or differentiation. Potential mediator of neuronal apoptosis. This is SNF-related serine/threonine-protein kinase from Homo sapiens (Human).